The chain runs to 273 residues: Large ribosomal subunit protein uL2 (273 aa).

2 disordered regions span residues threonine 28 to glycine 55 and glycine 222 to lysine 273. Positions tyrosine 255–lysine 273 are enriched in basic residues.

Belongs to the universal ribosomal protein uL2 family. Part of the 50S ribosomal subunit. Forms a bridge to the 30S subunit in the 70S ribosome.

One of the primary rRNA binding proteins. Required for association of the 30S and 50S subunits to form the 70S ribosome, for tRNA binding and peptide bond formation. It has been suggested to have peptidyltransferase activity; this is somewhat controversial. Makes several contacts with the 16S rRNA in the 70S ribosome. In Treponema pallidum (strain Nichols), this protein is Large ribosomal subunit protein uL2.